Here is a 215-residue protein sequence, read N- to C-terminus: Protein ERP2 (215 aa).

Residues 1–25 (MIKSTIALPSFFIVLILALVNSVAA) form the signal peptide. Topologically, residues 26 to 182 (SSSYAPVAIS…TVNSTESRLT (157 aa)) are lumenal. The GOLD domain maps to 41-123 (KECLYYDMVT…LKKVEITLEK (83 aa)). Residues 183-203 (WLSILIIIIIAVISIAQVLLI) form a helical membrane-spanning segment. At 204-215 (QFLFTGRQKNYV) the chain is on the cytoplasmic side.

This sequence belongs to the EMP24/GP25L family. As to quaternary structure, associates with EMP24, ERV25 and ERP1.

It localises to the endoplasmic reticulum membrane. In terms of biological role, involved in vesicular protein trafficking. This is Protein ERP2 (ERP2) from Saccharomyces cerevisiae (strain ATCC 204508 / S288c) (Baker's yeast).